A 301-amino-acid chain; its full sequence is Immune-associated nucleotide-binding protein 5 (301 aa).

The AIG1-type G domain maps to 11-214 (EPVRNIVLVG…FTEENDLNEK (204 aa)). The tract at residues 20–27 (GPTGNGKS) is G1. 20 to 28 (GPTGNGKSS) contacts GTP. The interval 46–50 (CKTCK) is G2. The tract at residues 63 to 66 (DTPG) is G3. The tract at residues 133–136 (TGGD) is G4. The segment at 172–174 (NNK) is G5. Asparagine 173 contributes to the GTP binding site.

This sequence belongs to the TRAFAC class TrmE-Era-EngA-EngB-Septin-like GTPase superfamily. AIG1/Toc34/Toc159-like paraseptin GTPase family. IAN subfamily. Expressed in pollen, cotyledons and lateral roots.

This chain is Immune-associated nucleotide-binding protein 5, found in Arabidopsis thaliana (Mouse-ear cress).